We begin with the raw amino-acid sequence, 129 residues long: Small ribosomal subunit protein uS11 (129 aa).

It belongs to the universal ribosomal protein uS11 family. In terms of assembly, part of the 30S ribosomal subunit. Interacts with proteins S7 and S18. Binds to IF-3.

In terms of biological role, located on the platform of the 30S subunit, it bridges several disparate RNA helices of the 16S rRNA. Forms part of the Shine-Dalgarno cleft in the 70S ribosome. In Allorhizobium ampelinum (strain ATCC BAA-846 / DSM 112012 / S4) (Agrobacterium vitis (strain S4)), this protein is Small ribosomal subunit protein uS11.